The following is a 62-amino-acid chain: Single-pass membrane and coiled-coil domain-containing protein 4 homolog (62 aa).

Positions 1–27 (MRQLPGKAAKETRKMKRERKQQNKEGH) are disordered. Residues 9 to 31 (AKETRKMKRERKQQNKEGHNRVV) adopt a coiled-coil conformation. The chain crosses the membrane as a helical span at residues 30–50 (VVTVAIPVCLAVFVMLIVYVY).

Belongs to the SMCO4 family.

The protein resides in the membrane. The sequence is that of Single-pass membrane and coiled-coil domain-containing protein 4 homolog from Nematostella vectensis (Starlet sea anemone).